A 225-amino-acid polypeptide reads, in one-letter code: Uridylate kinase (225 aa).

Gly9 to Ser10 is a binding site for ATP. Gly46 contributes to the UMP binding site. ATP-binding residues include Gly47 and Arg51. Residues Asp67 and Thr115–Thr121 contribute to the UMP site. The ATP site is built by Thr141, Asn142, Tyr147, and Asp150.

The protein belongs to the UMP kinase family. Homohexamer.

It localises to the cytoplasm. It catalyses the reaction UMP + ATP = UDP + ADP. It functions in the pathway pyrimidine metabolism; CTP biosynthesis via de novo pathway; UDP from UMP (UMPK route): step 1/1. With respect to regulation, inhibited by UTP. Functionally, catalyzes the reversible phosphorylation of UMP to UDP. This Methanococcus maripaludis (strain C6 / ATCC BAA-1332) protein is Uridylate kinase.